A 102-amino-acid polypeptide reads, in one-letter code: MAMAMGMAMRKEAAVAVMMVMVVTLAAGADAGAGAACEPAQLAVCASAILGGTKPSGECCGNLRAQQGCLCQYVKDPNYGHYVSSPHARDTLNLCGIPVPHC.

The signal sequence occupies residues 1 to 35 (MAMAMGMAMRKEAAVAVMMVMVVTLAAGADAGAGA). Cystine bridges form between Cys37-Cys71, Cys45-Cys59, Cys60-Cys95, and Cys69-Cys102.

Belongs to the plant LTP family. B11E subfamily. As to expression, aleurone.

In terms of biological role, potential phospholipid transfer protein. The protein is Probable non-specific lipid-transfer protein (LTP2) of Hordeum vulgare (Barley).